The primary structure comprises 79 residues: Major outer membrane lipoprotein Lpp 2 (79 aa).

An N-terminal signal peptide occupies residues 1 to 21; that stretch reads MNRTNKLILGAVVLGSALLAG. Cysteine 22 carries the N-palmitoyl cysteine lipid modification. Cysteine 22 is lipidated: S-diacylglycerol cysteine. 2 repeats span residues 25-35 and 39-49; these read NAKIDQLSSDV and SAKVDQLSNDV. A coiled-coil region spans residues 28–76; that stretch reads IDQLSSDVQTLSAKVDQLSNDVNAMRSDIQAAKDDAARANQRLDNKVSR. The segment at 60–79 is disordered; it reads KDDAARANQRLDNKVSRVRK. Residue lysine 79 is modified to N6-murein peptidoglycan lysine.

This sequence belongs to the Lpp family. As to quaternary structure, homotrimer.

The protein resides in the cell outer membrane. Its subcellular location is the secreted. The protein localises to the cell wall. A highly abundant outer membrane lipoprotein that controls the distance between the inner and outer membranes. The only protein known to be covalently linked to the peptidoglycan network (PGN). Also non-covalently binds the PGN. The link between the cell outer membrane and PGN contributes to maintenance of the structural and functional integrity of the cell envelope, and maintains the correct distance between the PGN and the outer membrane. The chain is Major outer membrane lipoprotein Lpp 2 from Salmonella paratyphi A (strain ATCC 9150 / SARB42).